The chain runs to 179 residues: Ubiquitin-conjugating enzyme E2 2 (179 aa).

Positions Met1–Pro28 are disordered. Residues Pro4–Asn150 form the UBC core domain. Cys88 acts as the Glycyl thioester intermediate in catalysis. The segment at Val145–Asp179 is disordered. The span at Trp149–Asp179 shows a compositional bias: acidic residues. The segment at Asp151–Asp179 is acidic tail.

Belongs to the ubiquitin-conjugating enzyme family.

Its subcellular location is the cytoplasm. The protein localises to the nucleus. The catalysed reaction is S-ubiquitinyl-[E1 ubiquitin-activating enzyme]-L-cysteine + [E2 ubiquitin-conjugating enzyme]-L-cysteine = [E1 ubiquitin-activating enzyme]-L-cysteine + S-ubiquitinyl-[E2 ubiquitin-conjugating enzyme]-L-cysteine.. It functions in the pathway protein modification; protein ubiquitination. Functionally, catalyzes the covalent attachment of ubiquitin to other proteins. Plays a role in transcription regulation by catalyzing the monoubiquitination of histone H2B to form H2BK123ub1. H2BK123ub1 gives a specific tag for epigenetic transcriptional activation and is also a prerequisite for H3K4me and H3K79me formation. Also involved in postreplication repair of UV-damaged DNA, in N-end rule-dependent protein degradation and in sporulation. The chain is Ubiquitin-conjugating enzyme E2 2 (UBC2) from Candida albicans (strain SC5314 / ATCC MYA-2876) (Yeast).